A 751-amino-acid chain; its full sequence is Valine--tRNA ligase (751 aa).

Position 520 (K520) interacts with ATP.

Belongs to the class-I aminoacyl-tRNA synthetase family. ValS type 2 subfamily.

The protein localises to the cytoplasm. It carries out the reaction tRNA(Val) + L-valine + ATP = L-valyl-tRNA(Val) + AMP + diphosphate. Functionally, catalyzes the attachment of valine to tRNA(Val). As ValRS can inadvertently accommodate and process structurally similar amino acids such as threonine, to avoid such errors, it has a 'posttransfer' editing activity that hydrolyzes mischarged Thr-tRNA(Val) in a tRNA-dependent manner. This Nanoarchaeum equitans (strain Kin4-M) protein is Valine--tRNA ligase (valS).